The chain runs to 877 residues: Clumping factor B (877 aa).

Positions 1-44 are cleaved as a signal peptide; the sequence is MKKRIDYLSNKQNKYSIRRFTVGTTSVIVGATILFGIGNHQAQA. Positions 15–26 match the YSIRK-G/S signaling motif motif; that stretch reads YSIRRFTVGTTS. Polar residues-rich tracts occupy residues 44 to 61 and 68 to 95; these read ASEQSNDTTQSSKNNASA and MIETPQLNTTANDTSDISANTNSANVDS. The interval 44 to 192 is disordered; the sequence is ASEQSNDTTQ…QGTSKPSVRT (149 aa). Residues 45-542 are ligand binding A region; it reads SEQSNDTTQS…GSADGDSAVN (498 aa). A compositionally biased stretch (low complexity) spans 96–119; the sequence is TTKPMSTQTSNTTTTEPASTNETP. Residues 120–189 show a composition bias toward polar residues; it reads QPTAIKNQAT…SNAQGTSKPS (70 aa). The MIDAS-like motif signature appears at 272 to 276; the sequence is DYSNS. Positions 530–849 are disordered; that stretch reads YGGGSADGDS…ETGDKSENTN (320 aa). Pro residues predominate over residues 545-555; that stretch reads DPTPGPPVDPE. Residues 556-801 are compositionally biased toward acidic residues; the sequence is PSPDPEPEPT…SDSDSDSDSD (246 aa). Residues 805 to 816 show a composition bias toward polar residues; that stretch reads RVTPPNNEQKAP. Over residues 833–846 the composition is skewed to basic and acidic residues; it reads HKTDALPETGDKSE. Residues 838–842 carry the LPXTG sorting signal motif; the sequence is LPETG. Thr841 bears the Pentaglycyl murein peptidoglycan amidated threonine mark. The propeptide at 842-877 is removed by sortase; that stretch reads GDKSENTNATLFGAMMALLGSLLLFRKRKQDHKEKA.

It belongs to the serine-aspartate repeat-containing protein (SDr) family. Proteolytically cleaved by aureolysin (aur). This cleavage leads to the inactivation of ClfB.

It localises to the secreted. It is found in the cell wall. Cell surface-associated protein implicated in virulence by promoting bacterial attachment to both alpha- and beta-chains of human fibrinogen and inducing the formation of bacterial clumps. This is Clumping factor B (clfB) from Staphylococcus aureus (strain Mu50 / ATCC 700699).